Here is a 265-residue protein sequence, read N- to C-terminus: Undecaprenyl-diphosphatase (265 aa).

8 consecutive transmembrane segments (helical) span residues 14-34 (GLGE…PWLF), 40-60 (SLVF…VYFW), 79-99 (GKLF…GYLF), 112-132 (LLIA…DSIA), 141-161 (MNVF…FPGI), 182-202 (AKFS…VSLL), 217-237 (IGFF…LGIV), and 242-262 (FKIF…FYLL).

This sequence belongs to the UppP family.

It localises to the cell membrane. The enzyme catalyses di-trans,octa-cis-undecaprenyl diphosphate + H2O = di-trans,octa-cis-undecaprenyl phosphate + phosphate + H(+). Its function is as follows. Catalyzes the dephosphorylation of undecaprenyl diphosphate (UPP). Confers resistance to bacitracin. The polypeptide is Undecaprenyl-diphosphatase (Caldicellulosiruptor bescii (strain ATCC BAA-1888 / DSM 6725 / KCTC 15123 / Z-1320) (Anaerocellum thermophilum)).